Here is a 413-residue protein sequence, read N- to C-terminus: Alpha-1-antitrypsin-like protein GS55-MS (413 aa).

A signal peptide spans 1 to 24; it reads MPSSISWGLLLLAGLSCLVAGSLA. 3 N-linked (GlcNAc...) asparagine glycosylation sites follow: Asn65, Asn102, and Asn266. Positions 368–387 are RCL; the sequence is GATFLEMMPMSLPPEVKFDK.

Belongs to the serpin family.

It localises to the secreted. Functionally, inhibitor of serine proteases. Its primary target is elastase, but it also has a moderate affinity for plasmin and thrombin. This chain is Alpha-1-antitrypsin-like protein GS55-MS, found in Ictidomys tridecemlineatus (Thirteen-lined ground squirrel).